The sequence spans 223 residues: 23 kDa piroplasm membrane protein (223 aa).

The N-terminal stretch at 1–19 (MHKFTKVFFVAILVHTLKS) is a signal peptide. The Extracellular portion of the chain corresponds to 20–197 (GLVFTPVSGT…EEEKSDKKKY (178 aa)). N69 carries an N-linked (GlcNAc...) asparagine glycan. The chain crosses the membrane as a helical span at residues 198–218 (VLMVVVVVVFVVVASLVVFLV). Residues 219–223 (KFCLK) are Cytoplasmic-facing.

Its subcellular location is the membrane. In Theileria buffeli, this protein is 23 kDa piroplasm membrane protein.